A 727-amino-acid chain; its full sequence is 1,4-alpha-glucan branching enzyme GlgB (727 aa).

The active-site Nucleophile is Asp-405. The active-site Proton donor is the Glu-458.

The protein belongs to the glycosyl hydrolase 13 family. GlgB subfamily. Monomer.

It catalyses the reaction Transfers a segment of a (1-&gt;4)-alpha-D-glucan chain to a primary hydroxy group in a similar glucan chain.. Its pathway is glycan biosynthesis; glycogen biosynthesis. In terms of biological role, catalyzes the formation of the alpha-1,6-glucosidic linkages in glycogen by scission of a 1,4-alpha-linked oligosaccharide from growing alpha-1,4-glucan chains and the subsequent attachment of the oligosaccharide to the alpha-1,6 position. The sequence is that of 1,4-alpha-glucan branching enzyme GlgB from Yersinia pestis bv. Antiqua (strain Antiqua).